The chain runs to 232 residues: 2,3,4,5-tetrahydropyridine-2,6-dicarboxylate N-acetyltransferase (232 aa).

It belongs to the transferase hexapeptide repeat family. DapH subfamily.

It catalyses the reaction (S)-2,3,4,5-tetrahydrodipicolinate + acetyl-CoA + H2O = L-2-acetamido-6-oxoheptanedioate + CoA. Its pathway is amino-acid biosynthesis; L-lysine biosynthesis via DAP pathway; LL-2,6-diaminopimelate from (S)-tetrahydrodipicolinate (acetylase route): step 1/3. Catalyzes the transfer of an acetyl group from acetyl-CoA to tetrahydrodipicolinate. In Streptococcus pneumoniae (strain CGSP14), this protein is 2,3,4,5-tetrahydropyridine-2,6-dicarboxylate N-acetyltransferase.